A 584-amino-acid polypeptide reads, in one-letter code: Asparagine synthetase [glutamine-hydrolyzing] 1 (584 aa).

Cysteine 2 acts as the For GATase activity in catalysis. The Glutamine amidotransferase type-2 domain maps to 2-185 (CGILAVLGCS…PGHFYSSKLG (184 aa)). L-glutamine contacts are provided by residues 50-54 (RLAVI), 75-77 (NGE), and aspartate 98. In terms of domain architecture, Asparagine synthetase spans 193–516 (PPWFNESVPS…PQNSARLTVP (324 aa)). ATP contacts are provided by residues leucine 231, valine 267, and 341-342 (SG).

The enzyme catalyses L-aspartate + L-glutamine + ATP + H2O = L-asparagine + L-glutamate + AMP + diphosphate + H(+). Its pathway is amino-acid biosynthesis; L-asparagine biosynthesis; L-asparagine from L-aspartate (L-Gln route): step 1/1. In terms of biological role, essential for nitrogen assimilation, distribution and remobilization within the plant via the phloem. The protein is Asparagine synthetase [glutamine-hydrolyzing] 1 (ASN1) of Arabidopsis thaliana (Mouse-ear cress).